We begin with the raw amino-acid sequence, 519 residues long: 2-isopropylmalate synthase (519 aa).

Positions 5-267 (VIIFDTTLRD…TTNVNPMEIS (263 aa)) constitute a Pyruvate carboxyltransferase domain. The Mn(2+) site is built by Asp-14, His-202, His-204, and Asn-238. The regulatory domain stretch occupies residues 392–519 (RLESINVQSG…KEQLIHIDQV (128 aa)).

It belongs to the alpha-IPM synthase/homocitrate synthase family. LeuA type 1 subfamily. Homodimer. Requires Mn(2+) as cofactor.

It localises to the cytoplasm. It carries out the reaction 3-methyl-2-oxobutanoate + acetyl-CoA + H2O = (2S)-2-isopropylmalate + CoA + H(+). It functions in the pathway amino-acid biosynthesis; L-leucine biosynthesis; L-leucine from 3-methyl-2-oxobutanoate: step 1/4. Its function is as follows. Catalyzes the condensation of the acetyl group of acetyl-CoA with 3-methyl-2-oxobutanoate (2-ketoisovalerate) to form 3-carboxy-3-hydroxy-4-methylpentanoate (2-isopropylmalate). The protein is 2-isopropylmalate synthase of Psychromonas ingrahamii (strain DSM 17664 / CCUG 51855 / 37).